Reading from the N-terminus, the 431-residue chain is MTRPLLSPEWVARLKQFKKLIVGFSGGLDSTVLLHVLASTPPLYNQLLAVHINHGISGNSLNWQRHCEQLCLDLGIAFIAKAIEFDRSANVEEAARNARYDFFSSLLEDNDCLVLGHHLDDQAETVLLQLFRGAGVDGLAAMQECSNLGAGQLARPFLTCPRVELEHYARIHELKWIEDESNQDTKYSRNYLRHRVMPLLLEKWPGVAGNISRAATHCQQAKANLEVLAIKDCPDLLNATDHLLIEPLKGLEFERITNVLKFWLKKNRVQLPSSKTFQRIIHEIIFAKLDAMPTVSWNQIQVRRFQQHLYLLKADQINLPKAIKWQQFPASLTYPDANIELSAVKAQKGLMIPKDAQIEIRFRKGGEEIYWHDQTKHLKKLFQEWQIPPWLRERVPLVYINDQLACVVGYAVSDLFFTTNPLEAWSIVNNS.

Residue 25–30 (SGGLDS) coordinates ATP.

The protein belongs to the tRNA(Ile)-lysidine synthase family.

Its subcellular location is the cytoplasm. The catalysed reaction is cytidine(34) in tRNA(Ile2) + L-lysine + ATP = lysidine(34) in tRNA(Ile2) + AMP + diphosphate + H(+). Ligates lysine onto the cytidine present at position 34 of the AUA codon-specific tRNA(Ile) that contains the anticodon CAU, in an ATP-dependent manner. Cytidine is converted to lysidine, thus changing the amino acid specificity of the tRNA from methionine to isoleucine. In Legionella pneumophila (strain Lens), this protein is tRNA(Ile)-lysidine synthase.